Here is a 204-residue protein sequence, read N- to C-terminus: NADH-quinone oxidoreductase subunit C (204 aa).

The protein belongs to the complex I 30 kDa subunit family. NDH-1 is composed of 14 different subunits. Subunits NuoB, C, D, E, F, and G constitute the peripheral sector of the complex.

It is found in the cell inner membrane. It catalyses the reaction a quinone + NADH + 5 H(+)(in) = a quinol + NAD(+) + 4 H(+)(out). Its function is as follows. NDH-1 shuttles electrons from NADH, via FMN and iron-sulfur (Fe-S) centers, to quinones in the respiratory chain. The immediate electron acceptor for the enzyme in this species is believed to be ubiquinone. Couples the redox reaction to proton translocation (for every two electrons transferred, four hydrogen ions are translocated across the cytoplasmic membrane), and thus conserves the redox energy in a proton gradient. The chain is NADH-quinone oxidoreductase subunit C from Rhodopseudomonas palustris (strain ATCC BAA-98 / CGA009).